A 589-amino-acid chain; its full sequence is Protein POF1B (589 aa).

The stretch at 334–443 (TFSNIREELG…QNLRMQVSET (110 aa)) forms a coiled coil.

In terms of assembly, interacts with nonmuscle actin.

Its subcellular location is the cell junction. It localises to the tight junction. Plays a key role in the organization of epithelial monolayers by regulating the actin cytoskeleton. May be involved in ovary development. In Homo sapiens (Human), this protein is Protein POF1B (POF1B).